The chain runs to 227 residues: Transmembrane emp24 domain-containing protein 1 (227 aa).

The first 23 residues, 1 to 23 (MMAAGAALALALWLLMPPVGVGG), serve as a signal peptide directing secretion. At 24-194 (AGPPPIQDGE…LQEGNLERVN (171 aa)) the chain is on the extracellular side. The GOLD domain maps to 43-125 (KQCFYQSAPA…EKLVFFELIF (83 aa)). Positions 145–170 (EMLDVKMEDIKESIETMRTRLERSIQ) form a coiled coil. Residues 195–215 (FWSAVNVAVLLLVAVLQVCTL) traverse the membrane as a helical segment. Topologically, residues 216–227 (KRFFQDKRPVPT) are cytoplasmic. Positions 218-219 (FF) match the COPII vesicle coat-binding motif. Residues 218-227 (FFQDKRPVPT) carry the COPI vesicle coat-binding motif.

Belongs to the EMP24/GP25L family. Homodimer in endoplasmic reticulum, endoplasmic reticulum-Golgi intermediate compartment and cis-Golgi network. Interacts with IL1RL1. Interacts with RNF26; this interaction is important to modulate innate immune signaling through the cGAS-STING pathway.

Its subcellular location is the cell membrane. The protein localises to the endoplasmic reticulum membrane. The protein resides in the golgi apparatus. It localises to the cis-Golgi network membrane. It is found in the endoplasmic reticulum-Golgi intermediate compartment membrane. In terms of biological role, potential role in vesicular protein trafficking, mainly in the early secretory pathway. May act as a cargo receptor at the lumenal side for incorporation of secretory cargo molecules into transport vesicles and may be involved in vesicle coat formation at the cytoplasmic side. Plays a positive role in IL-33-mediated IL-8 and IL-6 production by interacting with interleukin-33 receptor IL1RL1. Plays also a role in the modulation of innate immune signaling through the cGAS-STING pathway by interacting with RNF26. This Pongo abelii (Sumatran orangutan) protein is Transmembrane emp24 domain-containing protein 1 (TMED1).